Here is a 350-residue protein sequence, read N- to C-terminus: Protein Wnt-2 (350 aa).

Positions 1–25 (MNFLPNGICFYLSVAICWFSSRVDA) are cleaved as a signal peptide. 11 disulfides stabilise this stretch: C74–C85, C125–C133, C135–C155, C204–C218, C206–C213, C276–C307, C292–C302, C306–C346, C322–C337, C324–C334, and C329–C330. N-linked (GlcNAc...) asparagine glycosylation occurs at N132. Residue S210 is the site of O-palmitoleoyl serine; by PORCN attachment. N293 carries N-linked (GlcNAc...) asparagine glycosylation.

The protein belongs to the Wnt family. Post-translationally, palmitoleoylation is required for efficient binding to frizzled receptors. Depalmitoleoylation leads to Wnt signaling pathway inhibition.

The protein localises to the secreted. The protein resides in the extracellular space. Its subcellular location is the extracellular matrix. In terms of biological role, ligand for members of the frizzled family of seven transmembrane receptors. Functions in the canonical Wnt signaling pathway that results in activation of transcription factors of the TCF/LEF family. This is Protein Wnt-2 (wnt2) from Danio rerio (Zebrafish).